A 387-amino-acid chain; its full sequence is Sorting nexin-7 (387 aa).

The region spanning 30–151 (KDLFITVDEP…IFLTAQAWEL (122 aa)) is the PX domain. A 1,2-diacyl-sn-glycero-3-phospho-(1D-myo-inositol-3-phosphate)-binding residues include Arg73, Gln75, Lys103, and Arg117. Residues 178–387 (GVKNRPEEFM…HLEETSEDKP (210 aa)) enclose the BAR domain.

This sequence belongs to the sorting nexin family. As to quaternary structure, heterodimer; heterodimerizes with SNX4.

It localises to the early endosome membrane. Functionally, involved in the regulation of endocytosis and in several stages of intracellular trafficking. Together with SNX4, involved in autophagosome assembly by regulating trafficking and recycling of phospholipid scramblase ATG9A. The polypeptide is Sorting nexin-7 (SNX7) (Macaca fascicularis (Crab-eating macaque)).